A 151-amino-acid chain; its full sequence is UPF0178 protein Ping_0754 (151 aa).

The protein belongs to the UPF0178 family.

In Psychromonas ingrahamii (strain DSM 17664 / CCUG 51855 / 37), this protein is UPF0178 protein Ping_0754.